The following is a 254-amino-acid chain: Zinc import ATP-binding protein ZnuC (254 aa).

Residues 5-221 (ICAADLSVSH…PAYRALFGSE (217 aa)) form the ABC transporter domain. Residue 38–45 (GPNGSGKS) coordinates ATP. Basic and acidic residues predominate over residues 234-245 (DHDHDHVAEGHR). The disordered stretch occupies residues 234-254 (DHDHDHVAEGHRHGPACAHPH).

Belongs to the ABC transporter superfamily. Zinc importer (TC 3.A.1.15.5) family. In terms of assembly, the complex is composed of two ATP-binding proteins (ZnuC), two transmembrane proteins (ZnuB) and a solute-binding protein (ZnuA).

It localises to the cell inner membrane. The catalysed reaction is Zn(2+)(out) + ATP(in) + H2O(in) = Zn(2+)(in) + ADP(in) + phosphate(in) + H(+)(in). Its function is as follows. Part of the ABC transporter complex ZnuABC involved in zinc import. Responsible for energy coupling to the transport system. The polypeptide is Zinc import ATP-binding protein ZnuC (Paracoccus denitrificans (strain Pd 1222)).